A 741-amino-acid chain; its full sequence is Cysteine--tRNA ligase, cytoplasmic (741 aa).

Cys-46 contacts Zn(2+). The 'HIGH' region signature appears at 48 to 58 (PTVYDASHMGH). Ser-297 is modified (phosphoserine). Zn(2+) contacts are provided by Cys-340, His-365, and Glu-369. The short motif at 398 to 402 (KMSKS) is the 'KMSKS' region element. Lys-401 is an ATP binding site.

This sequence belongs to the class-I aminoacyl-tRNA synthetase family. The cofactor is Zn(2+).

It is found in the cytoplasm. It carries out the reaction tRNA(Cys) + L-cysteine + ATP = L-cysteinyl-tRNA(Cys) + AMP + diphosphate. In Drosophila pseudoobscura pseudoobscura (Fruit fly), this protein is Cysteine--tRNA ligase, cytoplasmic (Aats-cys).